The primary structure comprises 261 residues: Sulfur carrier protein FdhD (261 aa).

The active-site Cysteine persulfide intermediate is cysteine 105. Phenylalanine 245–arginine 250 lines the Mo-bis(molybdopterin guanine dinucleotide) pocket.

This sequence belongs to the FdhD family.

It is found in the cytoplasm. Its function is as follows. Required for formate dehydrogenase (FDH) activity. Acts as a sulfur carrier protein that transfers sulfur from IscS to the molybdenum cofactor prior to its insertion into FDH. The chain is Sulfur carrier protein FdhD from Listeria monocytogenes serotype 4b (strain F2365).